Here is a 341-residue protein sequence, read N- to C-terminus: Mitochondrial protein C2orf69 homolog (341 aa).

The N-terminal 35 residues, 1 to 35 (MLQVVQSPHNLVFMGSIRSVVACLSLAAVARKMTA), are a transit peptide targeting the mitochondrion.

This sequence belongs to the C2orf69 family.

The protein resides in the mitochondrion matrix. In terms of biological role, may play a role in the respiratory chain. The protein is Mitochondrial protein C2orf69 homolog of Danio rerio (Zebrafish).